Consider the following 367-residue polypeptide: Glutamate 5-kinase (367 aa).

Lys-9 serves as a coordination point for ATP. 3 residues coordinate substrate: Ser-49, Asp-136, and Asn-148. Residues 168 to 169 (TD) and 210 to 216 (TGGMKSK) each bind ATP. The region spanning 276–350 (SGQIEVDAGA…GMQSQDIQVR (75 aa)) is the PUA domain.

This sequence belongs to the glutamate 5-kinase family.

It localises to the cytoplasm. The enzyme catalyses L-glutamate + ATP = L-glutamyl 5-phosphate + ADP. Its pathway is amino-acid biosynthesis; L-proline biosynthesis; L-glutamate 5-semialdehyde from L-glutamate: step 1/2. Its function is as follows. Catalyzes the transfer of a phosphate group to glutamate to form L-glutamate 5-phosphate. The chain is Glutamate 5-kinase from Bacillus cereus (strain B4264).